We begin with the raw amino-acid sequence, 148 residues long: MNSDSVICLASLSNYCQYHILGIINNRIVPILIDTGASWSHISASFLKTHQIKNCEEKSVRRFDGTTKKLNKKTLIEIDLSGIQNVKLELYVDEEPNKILLGTDFLENFYFKIESDCLFLNQNQHPRFKLHEDKIFEIIQDLTIPNGI.

This is an uncharacterized protein from Glycine max (Soybean).